A 121-amino-acid polypeptide reads, in one-letter code: Small ribosomal subunit protein uS13 (121 aa).

Residues 91-121 (HRKGLPVRGQRTRTNARTRKGKKKTVAGKKK) are disordered.

This sequence belongs to the universal ribosomal protein uS13 family. In terms of assembly, part of the 30S ribosomal subunit. Forms a loose heterodimer with protein S19. Forms two bridges to the 50S subunit in the 70S ribosome.

Located at the top of the head of the 30S subunit, it contacts several helices of the 16S rRNA. In the 70S ribosome it contacts the 23S rRNA (bridge B1a) and protein L5 of the 50S subunit (bridge B1b), connecting the 2 subunits; these bridges are implicated in subunit movement. Contacts the tRNAs in the A and P-sites. This Treponema denticola (strain ATCC 35405 / DSM 14222 / CIP 103919 / JCM 8153 / KCTC 15104) protein is Small ribosomal subunit protein uS13.